Here is a 101-residue protein sequence, read N- to C-terminus: Urease subunit beta (101 aa).

It belongs to the urease beta subunit family. As to quaternary structure, heterotrimer of UreA (gamma), UreB (beta) and UreC (alpha) subunits. Three heterotrimers associate to form the active enzyme.

The protein localises to the cytoplasm. It carries out the reaction urea + 2 H2O + H(+) = hydrogencarbonate + 2 NH4(+). It functions in the pathway nitrogen metabolism; urea degradation; CO(2) and NH(3) from urea (urease route): step 1/1. The chain is Urease subunit beta from Bradyrhizobium sp. (strain BTAi1 / ATCC BAA-1182).